A 247-amino-acid polypeptide reads, in one-letter code: Carboxy-S-adenosyl-L-methionine synthase (247 aa).

Residues Y39, 64-66 (GCS), 89-90 (DN), 117-118 (DI), N132, and R199 contribute to the S-adenosyl-L-methionine site.

It belongs to the class I-like SAM-binding methyltransferase superfamily. Cx-SAM synthase family. In terms of assembly, homodimer.

It catalyses the reaction prephenate + S-adenosyl-L-methionine = carboxy-S-adenosyl-L-methionine + 3-phenylpyruvate + H2O. In terms of biological role, catalyzes the conversion of S-adenosyl-L-methionine (SAM) to carboxy-S-adenosyl-L-methionine (Cx-SAM). This Salmonella choleraesuis (strain SC-B67) protein is Carboxy-S-adenosyl-L-methionine synthase.